The primary structure comprises 471 residues: Argininosuccinate lyase (471 aa).

This sequence belongs to the lyase 1 family. Argininosuccinate lyase subfamily.

The protein resides in the cytoplasm. It catalyses the reaction 2-(N(omega)-L-arginino)succinate = fumarate + L-arginine. It functions in the pathway amino-acid biosynthesis; L-arginine biosynthesis; L-arginine from L-ornithine and carbamoyl phosphate: step 3/3. This is Argininosuccinate lyase from Paramagnetospirillum magneticum (strain ATCC 700264 / AMB-1) (Magnetospirillum magneticum).